A 270-amino-acid polypeptide reads, in one-letter code: MKRLRVFVVSDSVGETGDQVAKAVISQFRPGLENTVIRRFPHIQSEELIRKIVFLAAQQQAFIVYTLVRQEMRKLLRDLCEQEKIHAVDIIGPALQSMATFMEENPLETPGIVHMLDDDYFKKIEAIEFAVKYDDGRDPRGLLQADIVLVGVSRTSKTPLSQYLAHKKYKVANVPLVPEVEPPEELLQLDPKKCFGLIISPEKLNSIRKERLMSLGLNDDAIYAQHNRILEEIQHFEKIVGKIGCRVIDVTNKAVEETANTIIEHILTCK.

151-158 (GVSRTSKT) provides a ligand contact to ADP.

The protein belongs to the pyruvate, phosphate/water dikinase regulatory protein family. PDRP subfamily.

The enzyme catalyses N(tele)-phospho-L-histidyl/L-threonyl-[pyruvate, phosphate dikinase] + ADP = N(tele)-phospho-L-histidyl/O-phospho-L-threonyl-[pyruvate, phosphate dikinase] + AMP + H(+). It carries out the reaction N(tele)-phospho-L-histidyl/O-phospho-L-threonyl-[pyruvate, phosphate dikinase] + phosphate + H(+) = N(tele)-phospho-L-histidyl/L-threonyl-[pyruvate, phosphate dikinase] + diphosphate. Its function is as follows. Bifunctional serine/threonine kinase and phosphorylase involved in the regulation of the pyruvate, phosphate dikinase (PPDK) by catalyzing its phosphorylation/dephosphorylation. This chain is Putative pyruvate, phosphate dikinase regulatory protein, found in Lysinibacillus sphaericus (strain C3-41).